A 268-amino-acid polypeptide reads, in one-letter code: Indole-3-glycerol phosphate synthase (268 aa).

The protein belongs to the TrpC family.

It carries out the reaction 1-(2-carboxyphenylamino)-1-deoxy-D-ribulose 5-phosphate + H(+) = (1S,2R)-1-C-(indol-3-yl)glycerol 3-phosphate + CO2 + H2O. The protein operates within amino-acid biosynthesis; L-tryptophan biosynthesis; L-tryptophan from chorismate: step 4/5. This is Indole-3-glycerol phosphate synthase from Lachnospira eligens (strain ATCC 27750 / DSM 3376 / VPI C15-48 / C15-B4) (Eubacterium eligens).